A 165-amino-acid chain; its full sequence is Small ribosomal subunit protein uS3m (165 aa).

The transit peptide at Met1–Cys30 directs the protein to the mitochondrion.

The protein belongs to the universal ribosomal protein uS3 family. As to quaternary structure, component of the mitochondrial ribosome small subunit (28S) which comprises a 12S rRNA and about 30 distinct proteins.

The protein localises to the mitochondrion. This chain is Small ribosomal subunit protein uS3m (mRpS24), found in Drosophila melanogaster (Fruit fly).